A 407-amino-acid polypeptide reads, in one-letter code: MSNVYDILKERGYIKQLTHEEEIRELLGKEKISFYIGFDPTADSLHVGHFLQMMVMAHMQKAGHRPIALVGGGTGMIGDPTGKTDMRKMMTKEQIEHNCNCFKKQLAKIIDFSEDKAIMVNNADWLLNLNYIEFLREIGVHFSVNKMLTAECFKSRLEKGLSFLEFNYMLMQGYDFLELNRKYNCVMELGGDDQWSNILAGVDLIRRKESKSAYGMTFTLLTNSEGKKMGKTESGALWLDPEKTSPYEFYQYWRNVADADVEKCLRLITFLPMDEVRRLSSLEGAEINEAKKVLAFEVTKLIHGEEEAQKAKIAAEALFGGNAKDLGNMPTAYIDKNDLNNLLVDLLVKCEIFPSKSEARRLIKQGGLYLNDEKVTDMNLVVTEEHVTEDGIMIRRGKKNFNRIVVE.

Tyrosine 35 serves as a coordination point for L-tyrosine. The 'HIGH' region motif lies at 40–49; it reads PTADSLHVGH. L-tyrosine contacts are provided by tyrosine 168 and glutamine 172. Positions 228–232 match the 'KMSKS' region motif; that stretch reads KMGKT. Lysine 231 contacts ATP. The 65-residue stretch at 341–405 folds into the S4 RNA-binding domain; it reads NLLVDLLVKC…RGKKNFNRIV (65 aa).

This sequence belongs to the class-I aminoacyl-tRNA synthetase family. TyrS type 1 subfamily. Homodimer.

The protein localises to the cytoplasm. The enzyme catalyses tRNA(Tyr) + L-tyrosine + ATP = L-tyrosyl-tRNA(Tyr) + AMP + diphosphate + H(+). Its function is as follows. Catalyzes the attachment of tyrosine to tRNA(Tyr) in a two-step reaction: tyrosine is first activated by ATP to form Tyr-AMP and then transferred to the acceptor end of tRNA(Tyr). The sequence is that of Tyrosine--tRNA ligase from Clostridium botulinum (strain Kyoto / Type A2).